The following is a 383-amino-acid chain: ATP phosphoribosyltransferase regulatory subunit (383 aa).

Belongs to the class-II aminoacyl-tRNA synthetase family. HisZ subfamily. In terms of assembly, heteromultimer composed of HisG and HisZ subunits.

It localises to the cytoplasm. The protein operates within amino-acid biosynthesis; L-histidine biosynthesis; L-histidine from 5-phospho-alpha-D-ribose 1-diphosphate: step 1/9. Its function is as follows. Required for the first step of histidine biosynthesis. May allow the feedback regulation of ATP phosphoribosyltransferase activity by histidine. This is ATP phosphoribosyltransferase regulatory subunit from Cupriavidus pinatubonensis (strain JMP 134 / LMG 1197) (Cupriavidus necator (strain JMP 134)).